A 598-amino-acid chain; its full sequence is Serine/threonine-protein kinase PLK1 (598 aa).

Residues 1–26 (MAQVAGKKLTVAPEAGKPPGIPGSSS) form a disordered region. 2 positions are modified to phosphoserine: S25 and S26. Residues 44–296 (YLRGRFLGKG…IDDLLNDEFF (253 aa)) enclose the Protein kinase domain. Residues 50–58 (LGKGGFAKC), K73, and E122 contribute to the ATP site. D167 serves as the catalytic Proton acceptor. ATP contacts are provided by residues 169–172 (KLGN) and D185. The activation loop stretch occupies residues 185 to 212 (DFGLATKVEYDGERKKTLCGTPNYIAPE). Residue T201 is modified to Phosphothreonine. S260 and S326 each carry phosphoserine; by autocatalysis. The D-box that targets the protein for proteasomal degradation in anaphase signature appears at 328–331 (RKPL). The disordered stretch occupies residues 336–360 (KGQDSPLVEKQSVPAKEEEMQQPES). Residue S340 is modified to Phosphoserine. The POLO box 1 domain occupies 404 to 482 (WVSKWVDYSD…LKYFRNYMSE (79 aa)). The segment at 487–501 (AGANITPREGDELAR) is linker. One can recognise a POLO box 2 domain in the interval 504–586 (FLRTWFRTRS…ARTMVEKLQS (83 aa)). The segment at 532-534 (HTK) is important for interaction with phosphorylated proteins.

The protein belongs to the protein kinase superfamily. Ser/Thr protein kinase family. Interacts with plk1 and kif2a. Interacts with fbxo5. Activated by phosphorylation on Thr-201 during M phase. In terms of processing, protein levels are down-regulated by proteasomal degradation in anaphase.

It localises to the nucleus. The protein resides in the cytoplasm. Its subcellular location is the cytoskeleton. It is found in the microtubule organizing center. The protein localises to the centrosome. It localises to the spindle. The protein resides in the midbody. It carries out the reaction L-seryl-[protein] + ATP = O-phospho-L-seryl-[protein] + ADP + H(+). It catalyses the reaction L-threonyl-[protein] + ATP = O-phospho-L-threonyl-[protein] + ADP + H(+). Its function is as follows. Plays multiple essential roles during mitosis. Phosphorylates the N-terminal domain of cdc25, which leads to cyclin b-cdc2 activation and mitotic entry. Also required for organization of bipolar spindles, and for exit from mitosis. Phosphorylates tpx2. This chain is Serine/threonine-protein kinase PLK1 (plk1), found in Xenopus tropicalis (Western clawed frog).